The primary structure comprises 629 residues: Pentatricopeptide repeat-containing protein At1g63150 (629 aa).

16 PPR repeats span residues 46–81 (ASGDYREILRNRLSDIIKVDDAVDLFGDMVKSRPFP), 82–116 (SIVEFNKLLSAVAKMNKFELVISLGEQMQTLGISH), 117–151 (DLYTYSIFINCFCRRSQLSLALAVLAKMMKLGYEP), 152–186 (DIVTLSSLLNGYCHSKRISDAVALVDQMVEMGYKP), 187–221 (DTFTFTTLIHGLFLHNKASEAVALVDQMVQRGCQP), 222–256 (DLVTYGTVVNGLCKRGDIDLALNLLNKMEAARIKA), 257–291 (NVVIFNTIIDSLCKYRHVEVAVDLFTEMETKGIRP), 292–326 (NVVTYNSLINCLCNYGRWSDASRLLSNMLEKKINP), 327–361 (NVVTFNALIDAFFKEGKLVEAEKLHEEMIQRSIDP), 362–396 (DTITYNLLINGFCMHNRLDEAKQMFKFMVSKDCLP), 397–431 (NIQTYNTLINGFCKCKRVEDGVELFREMSQRGLVG), 432–466 (NTVTYTTIIQGFFQAGDCDSAQMVFKQMVSNRVPT), 467–501 (DIMTYSILLHGLCSYGKLDTALVIFKYLQKSEMEL), 502–532 (NIFIYNTMIEGMCKAGKVGEAWDLFCSLSIK), 534–568 (DVVTYNTMISGLCSKRLLQEADDLFRKMKEDGTLP), and 569–603 (NSGTYNTLIRANLRDCDRAASAELIKEMRSSGFVG).

The protein belongs to the PPR family. P subfamily.

The sequence is that of Pentatricopeptide repeat-containing protein At1g63150 from Arabidopsis thaliana (Mouse-ear cress).